The sequence spans 78 residues: Large ribosomal subunit protein bL28 (78 aa).

It belongs to the bacterial ribosomal protein bL28 family.

The protein is Large ribosomal subunit protein bL28 of Aromatoleum aromaticum (strain DSM 19018 / LMG 30748 / EbN1) (Azoarcus sp. (strain EbN1)).